Here is an 820-residue protein sequence, read N- to C-terminus: Potassium channel GORK (820 aa).

Residues 1 to 69 (MGRLRRRQEI…PKNRWYKAWE (69 aa)) are Cytoplasmic-facing. A helical membrane pass occupies residues 70-90 (MFILVWAIYSSLFTPMEFGFF). Over 91 to 97 (RGLPERL) the chain is Extracellular. The chain crosses the membrane as a helical span at residues 98–118 (FVLDIVGQIAFLVDIVLQFFV). At 119–141 (AYRDTQTYRTVYKPTRIAFRYLK) the chain is on the cytoplasmic side. A helical transmembrane segment spans residues 142-162 (SHFLMDFIGCFPWDLIYKASG). Topologically, residues 163 to 168 (KHELVR) are extracellular. Residues 169 to 189 (YLLWIRLFRVRKVVEFFQRLE) traverse the membrane as a helical; Voltage-sensor segment. Over 190-203 (KDTRINYLFTRILK) the chain is Cytoplasmic. Residues 204 to 224 (LLFVEVYCTHTAACIFYYLAT) traverse the membrane as a helical segment. Residues 225-259 (TLPPENEGYTWIGSLKLGDYSYENFREIDLWKRYT) lie on the Extracellular side of the membrane. Residues 260–279 (TALYFAIVTMATVGYGDIHA) constitute an intramembrane region (pore-forming). Residues 280-285 (VNLREM) are Extracellular-facing. The chain crosses the membrane as a helical span at residues 286–306 (IFVMIYVSFDMVLGAYLIGNI). Residues 307–820 (TALIVKGSNT…YMISDTTDQT (514 aa)) are Cytoplasmic-facing. An a nucleoside 3',5'-cyclic phosphate-binding site is contributed by 386–508 (LFKGCSTEFI…ILNNIMEEKE (123 aa)). ANK repeat units lie at residues 528 to 559 (EAELALKVNSAAFQGDFYQLKSLIRSGADPNK), 563 to 592 (DGRSPLHLAACRGYEDITLFLIQEGVDVNL), 596 to 625 (FGHTPLFEAVKAGQEGVIGLLVKEGASFNL), 627 to 656 (DSGNFLCTTVAKGDSDFLKRLLSSGMNPNS), 660 to 689 (DHRTPLHVAASEGLFLMAKMLVEAGASVIS), and 693 to 722 (WGNSPLDEARLCGNKKLIKLLEDVKNAQSS). The KHA domain maps to 740–820 (KCTVFPFHPQ…YMISDTTDQT (81 aa)).

The protein belongs to the potassium channel family. Plant (TC 1.A.1.4) subfamily. In terms of assembly, the potassium channel is probably composed of a homo- or heterotetrameric complex of pore-forming subunits. As to expression, expressed in guard cell-containing tissues, in root epidermal cells and in root hairs. Detected in vascular cells of the root and shoot.

The protein resides in the membrane. In terms of biological role, major selective outward-rectifying potassium channel of the guard cell membrane. Involved in regulation of stomatal movements according to the water status. Assuming opened or closed conformations in response to the voltage difference across the membrane, the channel is activated by depolarization. Conductance of the channel is modulated in a potassium-dependent fashion. May interact with the cytoskeleton or with regulatory proteins. In Arabidopsis thaliana (Mouse-ear cress), this protein is Potassium channel GORK (GORK).